The sequence spans 157 residues: Probable cyclic pyranopterin monophosphate synthase (157 aa).

Substrate is bound by residues 75–77 (MCH) and 111–112 (ME). D126 is a catalytic residue.

This sequence belongs to the MoaC family. Homohexamer; trimer of dimers.

The enzyme catalyses (8S)-3',8-cyclo-7,8-dihydroguanosine 5'-triphosphate = cyclic pyranopterin phosphate + diphosphate. It functions in the pathway cofactor biosynthesis; molybdopterin biosynthesis. In terms of biological role, catalyzes the conversion of (8S)-3',8-cyclo-7,8-dihydroguanosine 5'-triphosphate to cyclic pyranopterin monophosphate (cPMP). This Methanosarcina mazei (strain ATCC BAA-159 / DSM 3647 / Goe1 / Go1 / JCM 11833 / OCM 88) (Methanosarcina frisia) protein is Probable cyclic pyranopterin monophosphate synthase.